The chain runs to 167 residues: Aphrodisin (167 aa).

A signal peptide spans 1–16 (MVKILVLALVFSLAHA). Residue Gln17 is modified to Pyrrolidone carboxylic acid. 2 disulfide bridges follow: Cys54-Cys58 and Cys73-Cys165. Residues Asn57 and Asn85 are each glycosylated (N-linked (GlcNAc...) asparagine).

This sequence belongs to the calycin superfamily. Lipocalin family. In terms of tissue distribution, expressed in the vagina, uterus, and Bartholin's glands of female hamsters. Secreted in vaginal discharge.

It localises to the secreted. Functionally, acts as an aphrodisiac pheromone, reliably eliciting copulatory behavior from male hamster. The sequence is that of Aphrodisin from Mesocricetus auratus (Golden hamster).